Consider the following 317-residue polypeptide: MTRIVFMGTPDFSVPVLRTLIEDGYEVVGVVTQPDRPKGRKKVLTPPPVKEEALRHGIPVLQPEKVRLTEEIEKVLALKPDLIVTAAFGQILPKELLDSPKYGCINVHASLLPELRGGAPIHYSILQGKKKTGITIMYMVEKLDAGDMISKVEVDIEETDNVGTLHDKLSVAGAKLLSETVPNVIAGSISPEKQDEEKATYAPNIKREQELLDWSRTGEELYNQIRGLNPWPVAYTTLNGQNLKIWASKKIAAPTTAEPGTVVAVEKEGIIVATGNETALLLTELQPAGKKRMKGEDFVRGAHVEAGDVLGVNNEKN.

A (6S)-5,6,7,8-tetrahydrofolate-binding site is contributed by 110–113; the sequence is SLLP.

This sequence belongs to the Fmt family.

It carries out the reaction L-methionyl-tRNA(fMet) + (6R)-10-formyltetrahydrofolate = N-formyl-L-methionyl-tRNA(fMet) + (6S)-5,6,7,8-tetrahydrofolate + H(+). Its function is as follows. Attaches a formyl group to the free amino group of methionyl-tRNA(fMet). The formyl group appears to play a dual role in the initiator identity of N-formylmethionyl-tRNA by promoting its recognition by IF2 and preventing the misappropriation of this tRNA by the elongation apparatus. The polypeptide is Methionyl-tRNA formyltransferase (Bacillus subtilis (strain 168)).